Reading from the N-terminus, the 295-residue chain is UDP-N-acetylenolpyruvoylglucosamine reductase (295 aa).

Residues 23 to 188 enclose the FAD-binding PCMH-type domain; it reads KVGGPADFLA…ISAKFALKPG (166 aa). Arg167 is an active-site residue. Catalysis depends on Ser217, which acts as the Proton donor. Residue Glu287 is part of the active site.

The protein belongs to the MurB family. It depends on FAD as a cofactor.

The protein resides in the cytoplasm. The enzyme catalyses UDP-N-acetyl-alpha-D-muramate + NADP(+) = UDP-N-acetyl-3-O-(1-carboxyvinyl)-alpha-D-glucosamine + NADPH + H(+). The protein operates within cell wall biogenesis; peptidoglycan biosynthesis. Functionally, cell wall formation. The chain is UDP-N-acetylenolpyruvoylglucosamine reductase from Streptococcus pyogenes serotype M3 (strain ATCC BAA-595 / MGAS315).